The chain runs to 62 residues: Sperm protamine P1 (62 aa).

The interval 1–62 is disordered; sequence MARYRHSXSR…RYSRRRRRRY (62 aa).

This sequence belongs to the protamine P1 family. Testis.

The protein localises to the nucleus. It is found in the chromosome. Its function is as follows. Protamines substitute for histones in the chromatin of sperm during the haploid phase of spermatogenesis. They compact sperm DNA into a highly condensed, stable and inactive complex. In Petrogale xanthopus (Yellow-footed rock wallaby), this protein is Sperm protamine P1 (PRM1).